Reading from the N-terminus, the 637-residue chain is MSEKNEIYDESQIQVLEGLEAVRKRPGMYIGSTGTRGLHHLVYEIVDNSIDEALAGYCSHIKVFIHKDNSVTVSDDGRGMPIGIHHKMKKPTVEVIMTILHAGGKFGGGAYRVSGGLHGVGASVVNALSETCEVEVKTEGHIWKQTYHRGKVASPFEKIGDSDEHGTKIYFKPDPEIFEDTEYDYDTLSQRLRELAFLNKGIKIELTDERHDKNEIFHYEGGLKSFVSYLNRNKEVVFKEPIYVEGSIDSNYSVEIALQYNDGYNENIFSFANNIHTIEGGTHLAGFKTALTRVINDYAKKFGYLKENDKNLSGEDIREGLTAVVSVKLTEPQFEGQTKTKLGNTEVRGIVDSIISERVSTYLEENPQIGKLVIDKALVASRAREAAKKAREITRRKSVLESTSLPGKLADCSSKDAEECEIYIVEGDSAGGSAKQGRNRRFQAILPLRGKIMNVEKQRIDKILNSEEIKAMATAFGGGIGKDFDVSKLRYHKIIIMTDADVDGAHIRTLILTFFYRYMTELISEGHVFIAQPPLYKVTKTRKEYYAYSDKELEDVLQDVGGKDKNTDIQRYKGLGEMNPEQLWETTMNPEQRTLIKVNIEDAMAADEIFTILMGDKVDPRRKFIEENATKVVNLDV.

The 115-residue stretch at 420 to 534 (CEIYIVEGDS…EGHVFIAQPP (115 aa)) folds into the Toprim domain. Positions 426, 499, and 501 each coordinate Mg(2+).

The protein belongs to the type II topoisomerase GyrB family. In terms of assembly, heterotetramer, composed of two GyrA and two GyrB chains. In the heterotetramer, GyrA contains the active site tyrosine that forms a transient covalent intermediate with DNA, while GyrB binds cofactors and catalyzes ATP hydrolysis. Requires Mg(2+) as cofactor. Mn(2+) serves as cofactor. The cofactor is Ca(2+).

It is found in the cytoplasm. The enzyme catalyses ATP-dependent breakage, passage and rejoining of double-stranded DNA.. In terms of biological role, a type II topoisomerase that negatively supercoils closed circular double-stranded (ds) DNA in an ATP-dependent manner to modulate DNA topology and maintain chromosomes in an underwound state. Negative supercoiling favors strand separation, and DNA replication, transcription, recombination and repair, all of which involve strand separation. Also able to catalyze the interconversion of other topological isomers of dsDNA rings, including catenanes and knotted rings. Type II topoisomerases break and join 2 DNA strands simultaneously in an ATP-dependent manner. The polypeptide is DNA gyrase subunit B (Clostridium acetobutylicum (strain ATCC 824 / DSM 792 / JCM 1419 / IAM 19013 / LMG 5710 / NBRC 13948 / NRRL B-527 / VKM B-1787 / 2291 / W)).